Here is a 431-residue protein sequence, read N- to C-terminus: Serine--tRNA ligase (431 aa).

An L-serine-binding site is contributed by 237–239 (TAE). 268 to 270 (RSE) is a binding site for ATP. Glu291 is a binding site for L-serine. 355 to 358 (EISS) is a binding site for ATP. Ser390 is a binding site for L-serine.

It belongs to the class-II aminoacyl-tRNA synthetase family. Type-1 seryl-tRNA synthetase subfamily. As to quaternary structure, homodimer. The tRNA molecule binds across the dimer.

It localises to the cytoplasm. It catalyses the reaction tRNA(Ser) + L-serine + ATP = L-seryl-tRNA(Ser) + AMP + diphosphate + H(+). The catalysed reaction is tRNA(Sec) + L-serine + ATP = L-seryl-tRNA(Sec) + AMP + diphosphate + H(+). It participates in aminoacyl-tRNA biosynthesis; selenocysteinyl-tRNA(Sec) biosynthesis; L-seryl-tRNA(Sec) from L-serine and tRNA(Sec): step 1/1. Its function is as follows. Catalyzes the attachment of serine to tRNA(Ser). Is also able to aminoacylate tRNA(Sec) with serine, to form the misacylated tRNA L-seryl-tRNA(Sec), which will be further converted into selenocysteinyl-tRNA(Sec). The protein is Serine--tRNA ligase of Neisseria gonorrhoeae (strain NCCP11945).